The chain runs to 464 residues: Protein phosphatase 2C homolog 2 (464 aa).

Residues 23–292 enclose the PPM-type phosphatase domain; sequence AFGLCAMQGW…DNMSIVVVAL (270 aa). 4 residues coordinate Mn(2+): D62, G63, D234, and D283. Residues 174-355 form an interaction with IRE1 region; sequence DGFVEMDRVN…KPQDKFTRDH (182 aa). Disordered stretches follow at residues 361 to 398 and 434 to 464; these read SVTAADNDDPMDIDDTDADTDAENLDPSSQSKSKTSGP and QLLQTMGHDPASSHPENDSNTDHKAGRSHLQ. Residues 366–384 are compositionally biased toward acidic residues; sequence DNDDPMDIDDTDADTDAEN. Residues T376 and T380 each carry the phosphothreonine modification. The span at 386–396 shows a compositional bias: polar residues; it reads DPSSQSKSKTS. A compositionally biased stretch (basic and acidic residues) spans 448-458; the sequence is PENDSNTDHKA.

Belongs to the PP2C family. Interacts with IRE1 (when phosphorylated); the interaction is direct and serves to attenuate the endoplasmic reticulum unfolded protein response. Interacts (when phosphorylated) with RAD53 (via domain FHA 1); the interaction is direct and serves to regulate DNA damage checkpoint signaling. Interacts with the ATG17-ATG29-ATG31 and ATG1-ATG13 supercomplex; to regulate induction of autophagy. Mg(2+) is required as a cofactor. The cofactor is Mn(2+).

The protein localises to the nucleus. It localises to the cytoplasm. It is found in the cytosol. It carries out the reaction O-phospho-L-seryl-[protein] + H2O = L-seryl-[protein] + phosphate. The catalysed reaction is O-phospho-L-threonyl-[protein] + H2O = L-threonyl-[protein] + phosphate. Its function is as follows. Dephosphorylating regulator for many key proteins. Dephosphorylates the cell cycle master regulator CDC28/cyclin-dependent kinase 1; its activity appears redundant with phosphatase PTC3. Dephosphorylates HOG1 at 'Thr-171', to attenuate activation of the stress-activated p38MAPK cascade; its activity appears redundant with phosphatase PTC3. Positively regulates both nonselective macroautophagy as well as the selective cytoplasm-to-vacuole (cvt) autophagy pathway and the genotoxin-induced targeted autophagy (GTA) pathway, possibly by dephosphorylating ATG13 to enable the interaction between the ATG17-ATG29-ATG31 and ATG1-ATG13 complexes; its activity appears redundant with phosphatase PTC3. Dephosphorylates RAD53, to regulate DNA damage checkpoint signaling. Dephosphorylates IRE1, to negatively regulate the endoplasmic reticulum unfolded protein response. The chain is Protein phosphatase 2C homolog 2 (PTC2) from Saccharomyces cerevisiae (strain ATCC 204508 / S288c) (Baker's yeast).